The sequence spans 283 residues: Phosphatidylserine decarboxylase proenzyme (283 aa).

Residues Asp-96, His-152, and Ser-250 each act as charge relay system; for autoendoproteolytic cleavage activity in the active site. Ser-250 acts as the Schiff-base intermediate with substrate; via pyruvic acid; for decarboxylase activity in catalysis. A Pyruvic acid (Ser); by autocatalysis modification is found at Ser-250.

Belongs to the phosphatidylserine decarboxylase family. PSD-B subfamily. Prokaryotic type I sub-subfamily. Heterodimer of a large membrane-associated beta subunit and a small pyruvoyl-containing alpha subunit. The cofactor is pyruvate. Post-translationally, is synthesized initially as an inactive proenzyme. Formation of the active enzyme involves a self-maturation process in which the active site pyruvoyl group is generated from an internal serine residue via an autocatalytic post-translational modification. Two non-identical subunits are generated from the proenzyme in this reaction, and the pyruvate is formed at the N-terminus of the alpha chain, which is derived from the carboxyl end of the proenzyme. The autoendoproteolytic cleavage occurs by a canonical serine protease mechanism, in which the side chain hydroxyl group of the serine supplies its oxygen atom to form the C-terminus of the beta chain, while the remainder of the serine residue undergoes an oxidative deamination to produce ammonia and the pyruvoyl prosthetic group on the alpha chain. During this reaction, the Ser that is part of the protease active site of the proenzyme becomes the pyruvoyl prosthetic group, which constitutes an essential element of the active site of the mature decarboxylase.

The protein localises to the cell membrane. The enzyme catalyses a 1,2-diacyl-sn-glycero-3-phospho-L-serine + H(+) = a 1,2-diacyl-sn-glycero-3-phosphoethanolamine + CO2. It functions in the pathway phospholipid metabolism; phosphatidylethanolamine biosynthesis; phosphatidylethanolamine from CDP-diacylglycerol: step 2/2. Functionally, catalyzes the formation of phosphatidylethanolamine (PtdEtn) from phosphatidylserine (PtdSer). The chain is Phosphatidylserine decarboxylase proenzyme from Acinetobacter baumannii (strain AB0057).